The sequence spans 475 residues: Ankyrin repeat, SAM and basic leucine zipper domain-containing protein 1 (475 aa).

3 positions are modified to phosphoserine: S17, S18, and S20. 6 ANK repeats span residues 45–74, 78–107, 110–144, 148–177, 181–210, and 214–243; these read EKNETFKKALTTGDISLVQELLDSGISVDT, YGWTPLMYAANVANVEMVQVLLDRGANASF, DKQTILISACSARGTEEQILKCVDLLLSRNADPNM, RLMTPVMYAARNGHPQVVALLVAHGADVNA, NGYTALTWAARQGHKHVVLKLLELGANKMI, and DGKTPSEIAKRNKHVEIFNFLSLTLNPLEG. In terms of domain architecture, SAM spans 272–334; sequence SYTAFGDLEI…KILAALKELE (63 aa).

In terms of assembly, interacts with DDX4, PIWIL1, RANBP9 and TDRD1.

It is found in the cytoplasm. Plays a central role during spermatogenesis by repressing transposable elements and preventing their mobilization, which is essential for the germline integrity. Acts via the piRNA metabolic process, which mediates the repression of transposable elements during meiosis by forming complexes composed of piRNAs and Piwi proteins and governs the methylation and subsequent repression of transposons. Its association with pi-bodies suggests a participation in the primary piRNAs metabolic process. Required prior to the pachytene stage to facilitate the production of multiple types of piRNAs, including those associated with repeats involved in the regulation of retrotransposons. May act by mediating protein-protein interactions during germ cell maturation. The sequence is that of Ankyrin repeat, SAM and basic leucine zipper domain-containing protein 1 (ASZ1) from Atelerix albiventris (Middle-African hedgehog).